The chain runs to 822 residues: LPS-assembly protein LptD (822 aa).

Positions 1–37 are cleaved as a signal peptide; the sequence is MRRASRSPFILSPVAHAVSRLVLCATLGWTYAGSGHA. The tract at residues 38–97 is disordered; that stretch reads QVPAPAGGSEVPLGARPPASAPVAAQQETPLKLKSSPALAEEVPNGPGDEGPTFVFGDSV.

It belongs to the LptD family. As to quaternary structure, component of the lipopolysaccharide transport and assembly complex. Interacts with LptE and LptA.

It localises to the cell outer membrane. In terms of biological role, together with LptE, is involved in the assembly of lipopolysaccharide (LPS) at the surface of the outer membrane. In Polaromonas sp. (strain JS666 / ATCC BAA-500), this protein is LPS-assembly protein LptD.